A 548-amino-acid polypeptide reads, in one-letter code: MGAKDVKFGNEARIKMLRGVNVLADAVKVTLGPKGRNVVLDKSFGAPSITKDGVSVAREIELEDKFENMGAQMVKEVASKANDAAGDGTTTATLLAQSIVNEGLKAVAAGMNPMDLKRGIDKAVISAVEELKNLSVPCSDSKAITQVGTISANADEKVGALIAEAMEKVGNDGVITVEEGTGLQNELEVVKGMQFDRGYLSPYFINKPETGIVELENPYILMADKKISNVREMLPILESVAKSGKPLLIISEDLEGEALATLVVNSMRGIVKVAAVKAPGFGDRRKAMLQDISILTGGSVISEELAMDLEKSTLEDLGQAKRVVINKDTTTIIGGSGEKQAIQSRIGQIRQEIQEATSDYDKEKLNERLAKLSGGVAVLKVGAATEVEMKEKKARVEDALHATRAAVEEGVVAGGGVALVRVAGKISNLRGHNEDQNVGIRVALRAMEAPLRQIVSNSGEEPSVVTNNVKDGKGNYGYNAATDEYGDMIDFGILDPTKVTRSALQYAASVAGLMITTECMVTDLPREDKSSDVASSPAGGMGGMGGMM.

ATP is bound by residues 30 to 33 (TLGP), K51, 87 to 91 (DGTTT), G415, 479 to 481 (NAA), and D495. The segment at 526–548 (REDKSSDVASSPAGGMGGMGGMM) is disordered. Residues 539–548 (GGMGGMGGMM) show a composition bias toward gly residues.

Belongs to the chaperonin (HSP60) family. In terms of assembly, forms a cylinder of 14 subunits composed of two heptameric rings stacked back-to-back. Interacts with the co-chaperonin GroES.

It is found in the cytoplasm. The enzyme catalyses ATP + H2O + a folded polypeptide = ADP + phosphate + an unfolded polypeptide.. Its function is as follows. Together with its co-chaperonin GroES, plays an essential role in assisting protein folding. The GroEL-GroES system forms a nano-cage that allows encapsulation of the non-native substrate proteins and provides a physical environment optimized to promote and accelerate protein folding. The chain is Chaperonin GroEL from Buchnera aphidicola subsp. Schizaphis graminum (strain Sg).